The sequence spans 291 residues: MSVLTTRAPAKINLTLHILGRRPGDGYHALESLVAFADVADTLELVPGPDLTLDISGPTAGPAGPLDDNLVLRAARHLAAGVDGLRLGAFRLHKQLPVAAGIGGGSSDAAAALRLLAELNGLALDYPAVIAAARATGADVPVCLDPRARMMRGAGEEIGPVLGLASLPAVLVNPGVPVSTAPVFKALGLAVGQQLDGAEHPVVGASLDADAVLGVIAPARNDLEAPALTVAPVIGEALGLLWAQAGCRLARMSGSGATVFAIFSDDGAAEMAAGAIRAAQPGWWVEPTRLA.

The active site involves Lys11. 97–107 is an ATP binding site; sequence PVAAGIGGGSS. The active site involves Asp139.

This sequence belongs to the GHMP kinase family. IspE subfamily.

It carries out the reaction 4-CDP-2-C-methyl-D-erythritol + ATP = 4-CDP-2-C-methyl-D-erythritol 2-phosphate + ADP + H(+). The protein operates within isoprenoid biosynthesis; isopentenyl diphosphate biosynthesis via DXP pathway; isopentenyl diphosphate from 1-deoxy-D-xylulose 5-phosphate: step 3/6. Catalyzes the phosphorylation of the position 2 hydroxy group of 4-diphosphocytidyl-2C-methyl-D-erythritol. In Methylorubrum extorquens (strain PA1) (Methylobacterium extorquens), this protein is 4-diphosphocytidyl-2-C-methyl-D-erythritol kinase.